The following is a 412-amino-acid chain: Serine hydroxymethyltransferase (412 aa).

(6S)-5,6,7,8-tetrahydrofolate contacts are provided by residues L117 and G121 to L123. K226 is subject to N6-(pyridoxal phosphate)lysine. S349–F351 is a binding site for (6S)-5,6,7,8-tetrahydrofolate.

Belongs to the SHMT family. As to quaternary structure, homodimer. Pyridoxal 5'-phosphate serves as cofactor.

It localises to the cytoplasm. It catalyses the reaction (6R)-5,10-methylene-5,6,7,8-tetrahydrofolate + glycine + H2O = (6S)-5,6,7,8-tetrahydrofolate + L-serine. The protein operates within one-carbon metabolism; tetrahydrofolate interconversion. It participates in amino-acid biosynthesis; glycine biosynthesis; glycine from L-serine: step 1/1. Functionally, catalyzes the reversible interconversion of serine and glycine with tetrahydrofolate (THF) serving as the one-carbon carrier. This reaction serves as the major source of one-carbon groups required for the biosynthesis of purines, thymidylate, methionine, and other important biomolecules. Also exhibits THF-independent aldolase activity toward beta-hydroxyamino acids, producing glycine and aldehydes, via a retro-aldol mechanism. This chain is Serine hydroxymethyltransferase, found in Lawsonia intracellularis (strain PHE/MN1-00).